The following is a 332-amino-acid chain: D-alanine--D-alanine ligase (332 aa).

Residues 124–329 enclose the ATP-grasp domain; sequence KMWFSALNIP…FPDYLLSNIN (206 aa). ATP is bound at residue 154 to 209; sequence ALVNWGSIFVKAASQGSSVGCYRIDNQEDVASTLAQAFTYSDYVIVEKTISARELE. Mg(2+) is bound by residues Asp283, Glu296, and Asn298.

This sequence belongs to the D-alanine--D-alanine ligase family. The cofactor is Mg(2+). Mn(2+) is required as a cofactor.

The protein localises to the cytoplasm. It catalyses the reaction 2 D-alanine + ATP = D-alanyl-D-alanine + ADP + phosphate + H(+). The protein operates within cell wall biogenesis; peptidoglycan biosynthesis. Cell wall formation. The polypeptide is D-alanine--D-alanine ligase (Shewanella piezotolerans (strain WP3 / JCM 13877)).